A 137-amino-acid chain; its full sequence is Ribosomal RNA large subunit methyltransferase H (137 aa).

S-adenosyl-L-methionine contacts are provided by residues Leu56, Gly85, and 104 to 109 (LSPLTF).

Belongs to the RNA methyltransferase RlmH family. As to quaternary structure, homodimer.

The protein resides in the cytoplasm. The enzyme catalyses pseudouridine(1915) in 23S rRNA + S-adenosyl-L-methionine = N(3)-methylpseudouridine(1915) in 23S rRNA + S-adenosyl-L-homocysteine + H(+). In terms of biological role, specifically methylates the pseudouridine at position 1915 (m3Psi1915) in 23S rRNA. This is Ribosomal RNA large subunit methyltransferase H from Prochlorococcus marinus (strain MIT 9515).